A 593-amino-acid polypeptide reads, in one-letter code: Aspartate--tRNA(Asp/Asn) ligase (593 aa).

E172 is an L-aspartate binding site. An aspartate region spans residues 196-199 (QLFK). R218 lines the L-aspartate pocket. Residues 218–220 (RDE) and Q227 contribute to the ATP site. H450 provides a ligand contact to L-aspartate. Position 484 (E484) interacts with ATP. An L-aspartate-binding site is contributed by R491. ATP is bound at residue 536–539 (GLDR).

Belongs to the class-II aminoacyl-tRNA synthetase family. Type 1 subfamily. In terms of assembly, homodimer.

The protein resides in the cytoplasm. It catalyses the reaction tRNA(Asx) + L-aspartate + ATP = L-aspartyl-tRNA(Asx) + AMP + diphosphate. Aspartyl-tRNA synthetase with relaxed tRNA specificity since it is able to aspartylate not only its cognate tRNA(Asp) but also tRNA(Asn). Reaction proceeds in two steps: L-aspartate is first activated by ATP to form Asp-AMP and then transferred to the acceptor end of tRNA(Asp/Asn). The protein is Aspartate--tRNA(Asp/Asn) ligase of Nitrosomonas eutropha (strain DSM 101675 / C91 / Nm57).